The primary structure comprises 143 residues: Fluoride-specific ion channel FluC (143 aa).

The next 4 membrane-spanning stretches (helical) occupy residues 6–26 (CILV…VSVL), 38–58 (TILI…LTLA), 70–90 (LFVM…SLQT), and 103–123 (MVNV…GHVV). Na(+) is bound by residues G78 and T81.

Belongs to the fluoride channel Fluc/FEX (TC 1.A.43) family.

It is found in the cell inner membrane. It carries out the reaction fluoride(in) = fluoride(out). Its activity is regulated as follows. Na(+) is not transported, but it plays an essential structural role and its presence is essential for fluoride channel function. In terms of biological role, fluoride-specific ion channel. Important for reducing fluoride concentration in the cell, thus reducing its toxicity. This Methylobacterium radiotolerans (strain ATCC 27329 / DSM 1819 / JCM 2831 / NBRC 15690 / NCIMB 10815 / 0-1) protein is Fluoride-specific ion channel FluC.